We begin with the raw amino-acid sequence, 230 residues long: Spliceosome-associated protein CWC15 homolog (230 aa).

2 disordered regions span residues 1–157 (MTTA…EEKQ) and 164–183 (AGNPLLNDTPAGSSTSGGDF). Residues 25 to 34 (KLSNQYSSKD) are compositionally biased toward polar residues. Coiled coils occupy residues 47-82 (GQETEADLRKKDLRRELEDKERNAIREKRARDSASS) and 119-164 (DSDE…NILA). A compositionally biased stretch (basic and acidic residues) spans 52–78 (ADLRKKDLRRELEDKERNAIREKRARD). Over residues 104 to 125 (DADEAVDELNSSDDDDSDEDDT) the composition is skewed to acidic residues. Over residues 131–157 (ELEKIKKERAEEKAARDEEIKEKEEKQ) the composition is skewed to basic and acidic residues.

The protein belongs to the CWC15 family. Component of spliceosomal complex.

It is found in the nucleus. Functionally, component of a spliceosomal complex that is required for activating pre-mRNA splicing. The polypeptide is Spliceosome-associated protein CWC15 homolog (Caenorhabditis elegans).